Here is a 103-residue protein sequence, read N- to C-terminus: UPF0145 protein pXO2-45/BXB0052/GBAA_pXO2_0052 (103 aa).

It belongs to the UPF0145 family.

The chain is UPF0145 protein pXO2-45/BXB0052/GBAA_pXO2_0052 from Bacillus anthracis.